Consider the following 452-residue polypeptide: MSVMQFSGLLVVWLLSTLFIATLTWFEFRRVRFNFNVFFSLLFLLTFFFGFPLTSVLVFRFDVGVAPPEILLQALLSAACFYGVYYVTYKTRLRKRVVDVPRKPLFTMNRVETHLTWVILMGIALVSVAIFFMHNGFLLFRLHSYSQIFSSEVSGVALKRFFYFFIPAMLVVYFLRQDSKAWLFFLVSTVAFGLLTYMIVGGTRANIIIAFAIFLFIGIIRGWISLWMLAAAGVLGIVGMFWLALKRYGLNVSGDEAFYTFLYLTRDTFSPWENLALLLQNYHNIEFQGLAPIVRDFYVFIPTWLWPGRPSIVLNSANYFTWEVLNNHSGLAISPTLIGSLVVMGGALFIPLGAIVVGLIIKWFDWLYELGNREPNRYKAAILHSFCFGAIFNMIVLAREGLDSFVSRVVFFLVVFGASLLVAKLLFWLFDSAGLIHKRTTSLPQAQVEGKL.

11 helical membrane passes run phenylalanine 6 to phenylalanine 26, valine 37 to leucine 57, valine 63 to glycine 83, valine 118 to leucine 138, glycine 155 to leucine 175, alanine 181 to glycine 201, isoleucine 207 to tryptophan 227, methionine 228 to tyrosine 248, leucine 341 to isoleucine 361, tyrosine 378 to alanine 398, and valine 410 to phenylalanine 430.

Belongs to the WzyE family. In terms of assembly, probably part of a complex composed of WzxE, WzyE and WzzE.

It localises to the cell inner membrane. The protein operates within bacterial outer membrane biogenesis; enterobacterial common antigen biosynthesis. In terms of biological role, probably involved in the polymerization of enterobacterial common antigen (ECA) trisaccharide repeat units. The protein is Probable ECA polymerase of Salmonella choleraesuis (strain SC-B67).